The following is an 898-amino-acid chain: MDPRYGAQPMPPRRSPSPGHPVQPGYQLDDNPFDDGRYGQYGPSSQHLAMPGHDPHGRLPTPSDHLSLNAAQSVDNLAGYGPPSGGDYAINPEAHHDAYYNQPYEPRPQHQGYDQGYEQDYDVPDNRPMLPHQHSDVPSEQYQDPPQQGGGIQRRKTVKQFALYRGNLVFDCRVPPLLLQQNPHGERDEFTHMRYSAATCDPNDFHDHDFTLRQRLFSKPRHTELFIVVTMYNEDEILFARTMTGVFKNIEYMCNRPNSKTWGKDAWKKIVVCVVSDGRSKINPRTRALLAGMGVYQEGIAKQHVNDKAVTAHIYEYTTQTHLQIKNNVVQLVHRRQPVQMLFCLKEKNAKKINSHRWFFNAFGRVLDPNICVLLDAGTRPGGSSIYHLWKAFDLEPMCGGACGEIKAMLGTGGRYLLNPLVAAQNFEYKMSNILDKPLESAFGFISVLPGAFSAYRYVALQNDKNGKGPLEKYFLGETLHGGSEAGLFESNMYLAEDRILCFELVTKRNCHWILQYVKSATGETDVPDTVTELVLQRRRWLNGSFFAAIYAIVHFLDFLRSDHTFLRKFAFFIEFIFNTINMIFAWFAIGNFFLVFKILTTSLGDDTLLGRTGEILGVVFTWLYGVFLITCFVLSLGNRPAGSGRLYTAMCWFWAIIMIYLMFAAVFISVKAIIADVNDENGFNISDIFKNKVFYMLIISLMSTYGIWLIASLIMLDPWHMVTSFAQYMLLTPTFTNVLNVYAFCNTHDVSWGTKGDDKVEELPSVNTKDGTGKTDLPDEGDLDAQYQREVAVFAQKFVEVKSAPTPSQLQERQMDYYRGVRTGVVLLWMVTNFGLAAIVLSSAGLDRISTKEDKEAEQLSRSNIYMSIVLWSVAGLSAFKFIGAMWFLVVRMFRGV.

Residues 1-154 (MDPRYGAQPM…PPQQGGGIQR (154 aa)) are disordered. The span at 9-21 (PMPPRRSPSPGHP) shows a compositional bias: pro residues. Polar residues-rich tracts occupy residues 64-75 (DHLSLNAAQSVD) and 136-146 (DVPSEQYQDPP). A run of 5 helical transmembrane segments spans residues 441–461 (SAFG…YVAL), 540–560 (RWLN…LDFL), 570–590 (FAFF…WFAI), 616–636 (ILGV…FVLS), and 651–671 (MCWF…FISV). Asparagine 685 is a glycosylation site (N-linked (GlcNAc...) asparagine). 4 helical membrane-spanning segments follow: residues 697-717 (MLII…LIML), 726-746 (FAQY…YAFC), 825-845 (GVVL…LSSA), and 870-890 (IVLW…MWFL).

Belongs to the chitin synthase family. Class I subfamily.

The protein resides in the cell membrane. It catalyses the reaction [(1-&gt;4)-N-acetyl-beta-D-glucosaminyl](n) + UDP-N-acetyl-alpha-D-glucosamine = [(1-&gt;4)-N-acetyl-beta-D-glucosaminyl](n+1) + UDP + H(+). Its function is as follows. Polymerizes chitin, a structural polymer of the cell wall and septum, by transferring the sugar moiety of UDP-GlcNAc to the non-reducing end of the growing chitin polymer. Shows additive effects in septum formation with CHS2, CHS3A, CHS4, CHS5, CHS6 and CHS7. Regulates mycelial growth and conidiation. Involved in virulence and mediates mycotoxin deoxinivalenol (DON) biosynthesis via the regulation of the expression of TRI4, TRI5 and TRI6. This Gibberella zeae (strain ATCC MYA-4620 / CBS 123657 / FGSC 9075 / NRRL 31084 / PH-1) (Wheat head blight fungus) protein is Chitin synthase 1.